The following is a 435-amino-acid chain: tRNA(Ile)-lysidine synthase (435 aa).

25 to 30 (SGGLDS) is a binding site for ATP.

This sequence belongs to the tRNA(Ile)-lysidine synthase family.

Its subcellular location is the cytoplasm. The enzyme catalyses cytidine(34) in tRNA(Ile2) + L-lysine + ATP = lysidine(34) in tRNA(Ile2) + AMP + diphosphate + H(+). Ligates lysine onto the cytidine present at position 34 of the AUA codon-specific tRNA(Ile) that contains the anticodon CAU, in an ATP-dependent manner. Cytidine is converted to lysidine, thus changing the amino acid specificity of the tRNA from methionine to isoleucine. This Photobacterium profundum (strain SS9) protein is tRNA(Ile)-lysidine synthase.